A 196-amino-acid chain; its full sequence is Fe/S biogenesis protein NfuA (196 aa).

Positions 154 and 157 each coordinate [4Fe-4S] cluster.

The protein belongs to the NfuA family. In terms of assembly, homodimer. Requires [4Fe-4S] cluster as cofactor.

Functionally, involved in iron-sulfur cluster biogenesis. Binds a 4Fe-4S cluster, can transfer this cluster to apoproteins, and thereby intervenes in the maturation of Fe/S proteins. Could also act as a scaffold/chaperone for damaged Fe/S proteins. This is Fe/S biogenesis protein NfuA from Blochmanniella pennsylvanica (strain BPEN).